We begin with the raw amino-acid sequence, 173 residues long: Protein tyrosine phosphatase type IVA 1 (173 aa).

Residues 8–161 (APVEVTYKNM…YRPKMRLRFK (154 aa)) enclose the Tyrosine-protein phosphatase domain. Cys49 and Cys104 are oxidised to a cystine. Asp72 functions as the Proton donor in the catalytic mechanism. An interaction with ATF5 region spans residues 97–132 (GCCIAVHCVAGLGRAPVLVALALIEGGMKYEDAVQF). The Phosphocysteine intermediate role is filled by Cys104. Residue 105–110 (VAGLGR) coordinates phosphate. Residue Arg110 participates in substrate binding. The residue at position 170 (Cys170) is a Cysteine methyl ester. The S-farnesyl cysteine moiety is linked to residue Cys170. Residues 171–173 (CIQ) constitute a propeptide, removed in mature form.

This sequence belongs to the protein-tyrosine phosphatase family. In terms of assembly, homotrimer. Interacts with ATF5 and tubulin. Farnesylated. Farnesylation is required for membrane targeting.

The protein localises to the cell membrane. Its subcellular location is the early endosome. The protein resides in the endoplasmic reticulum. It is found in the cytoplasm. It localises to the cytoskeleton. The protein localises to the spindle. Its subcellular location is the nucleus. It carries out the reaction O-phospho-L-tyrosyl-[protein] + H2O = L-tyrosyl-[protein] + phosphate. Its activity is regulated as follows. Inhibited by sodium orthovanadate and pentamidine. Its function is as follows. Protein tyrosine phosphatase which stimulates progression from G1 into S phase during mitosis. May play a role in the development and maintenance of differentiating epithelial tissues. This chain is Protein tyrosine phosphatase type IVA 1 (PTP4A1), found in Pongo abelii (Sumatran orangutan).